The sequence spans 150 residues: Calmodulin-like protein 7 (150 aa).

EF-hand domains are found at residues 1–36, 37–72, 75–110, and 113–148; these read MDPT…LGIY, IPDK…IMDE, EEEE…LGLK, and KTLD…GGFN. Ca(2+)-binding residues include Asp14, Asn16, Asp18, Thr20, Glu25, Asp50, Asn52, Asp54, Cys56, Glu61, Asp88, Asn90, Asp92, Glu99, Asp126, Asp128, Asp130, Arg132, and Glu137.

This sequence belongs to the calmodulin family.

Potential calcium sensor. The sequence is that of Calmodulin-like protein 7 (CML7) from Arabidopsis thaliana (Mouse-ear cress).